A 291-amino-acid polypeptide reads, in one-letter code: ATP synthase gamma chain (291 aa).

Belongs to the ATPase gamma chain family. As to quaternary structure, F-type ATPases have 2 components, CF(1) - the catalytic core - and CF(0) - the membrane proton channel. CF(1) has five subunits: alpha(3), beta(3), gamma(1), delta(1), epsilon(1). CF(0) has three main subunits: a, b and c.

It is found in the cell inner membrane. Functionally, produces ATP from ADP in the presence of a proton gradient across the membrane. The gamma chain is believed to be important in regulating ATPase activity and the flow of protons through the CF(0) complex. The polypeptide is ATP synthase gamma chain (Pelodictyon phaeoclathratiforme (strain DSM 5477 / BU-1)).